Consider the following 366-residue polypeptide: Adenosine deaminase (366 aa).

Zn(2+) contacts are provided by histidine 19 and histidine 21. 3 residues coordinate substrate: histidine 21, aspartate 23, and glycine 181. Residue histidine 208 participates in Zn(2+) binding. Glutamate 211 functions as the Proton donor in the catalytic mechanism. Aspartate 304 serves as a coordination point for Zn(2+).

This sequence belongs to the metallo-dependent hydrolases superfamily. Adenosine and AMP deaminases family. Adenosine deaminase subfamily. Requires Zn(2+) as cofactor.

It carries out the reaction adenosine + H2O + H(+) = inosine + NH4(+). The catalysed reaction is 2'-deoxyadenosine + H2O + H(+) = 2'-deoxyinosine + NH4(+). Its function is as follows. Catalyzes the hydrolytic deamination of adenosine and 2-deoxyadenosine. The polypeptide is Adenosine deaminase (Mycobacterium avium (strain 104)).